The sequence spans 199 residues: CASP-like protein 1D2 (199 aa).

Positions 1-27 are disordered; sequence MASTENPDPETGKSEPIPASATPPPSS. The residue at position 2 (Ala2) is an N-acetylalanine. The Cytoplasmic segment spans residues 2–36; sequence ASTENPDPETGKSEPIPASATPPPSSAASFLDCRK. Residues 37–57 form a helical membrane-spanning segment; that stretch reads IDIITRVLLFSATLTALIVMV. The Extracellular portion of the chain corresponds to 58–85; it reads TSDQTEMTQLPGVSSPAPVSAEFNDSPA. The chain crosses the membrane as a helical span at residues 86–106; the sequence is FIYFVVALVVASFYALISTLV. The Cytoplasmic segment spans residues 107–129; the sequence is SISLLLKPEFTAQFSIYLASLDM. A helical membrane pass occupies residues 130–150; the sequence is VMLGILASATGTAGGVAYIAL. Residues 151-171 lie on the Extracellular side of the membrane; it reads KGNEEVGWNKICNVYDKFCRY. Residues 172–192 traverse the membrane as a helical segment; it reads IATSLALSLFASLLLLVLSIW. The Cytoplasmic portion of the chain corresponds to 193–199; that stretch reads SALSKRT.

Belongs to the Casparian strip membrane proteins (CASP) family. Homodimer and heterodimers. As to expression, expressed in the root endodermis and flowers.

It is found in the cell membrane. This Arabidopsis thaliana (Mouse-ear cress) protein is CASP-like protein 1D2.